The sequence spans 204 residues: MLRIAIAKGRLMDSLINYLDVIEYTTLSETLKNRERQLLLSVDNIECILVKGSDVPIYVEQGMADIGIVGSDILDERQYNVNNLLNMPFGACHFAVAAKPETTNYRKIATSYVHTAETYFKSKGIDVELIKLNGSVELAGVVDMVDGIVDIVQTGTTLKANGLVEKQHISDINARLITNKAAYFKKSQLIEQFIRSLEVSIANA.

It belongs to the ATP phosphoribosyltransferase family. Short subfamily. As to quaternary structure, heteromultimer composed of HisG and HisZ subunits.

The protein resides in the cytoplasm. The catalysed reaction is 1-(5-phospho-beta-D-ribosyl)-ATP + diphosphate = 5-phospho-alpha-D-ribose 1-diphosphate + ATP. The protein operates within amino-acid biosynthesis; L-histidine biosynthesis; L-histidine from 5-phospho-alpha-D-ribose 1-diphosphate: step 1/9. Its function is as follows. Catalyzes the condensation of ATP and 5-phosphoribose 1-diphosphate to form N'-(5'-phosphoribosyl)-ATP (PR-ATP). Has a crucial role in the pathway because the rate of histidine biosynthesis seems to be controlled primarily by regulation of HisG enzymatic activity. This is ATP phosphoribosyltransferase from Staphylococcus aureus (strain USA300).